Reading from the N-terminus, the 303-residue chain is Thioesterase poxG (303 aa).

This sequence belongs to the lcsJ thioesterase family.

The protein operates within secondary metabolite biosynthesis. Functionally, thioesterase; part of the gene cluster that mediates the biosynthesis of oxaleimides, cytotoxic compounds containing an unusual disubstituted succinimide moiety. The first step of the pathway is provided by the HR-PKS poxF that serves in a new mode of collaborative biosynthesis with the PKS-NRPS poxE, by providing the olefin containing amino acid substrate via the synthesis of an ACP-bound dec-4-enoate. The cytochrome P450 monooxygenase poxM-catalyzed oxidation at the alpha-position creates the enzyme-bound 2-hydroxydec-4-enoyl-ACP thioester, which may be prone to spontaneous hydrolysis to yield 2-hydroxydec-4-enoic acid due to increased electrophilicity of the carbonyl. 2-hydroxydec-4-enoic acid can then be further oxidized by poxM to yield the alpha-ketoacid 2-oxodec-4-enoicacid, which is reductively aminated by the aminotransferase poxL to yield (S,E)-2-aminodec-4-enoic acid. The Hybrid PKS-NRPS synthetase poxE then performs condensation between the octaketide product of its PKS modules and the amino group of (S,E)-2-aminodec-4-enoic acid which is activated and incorporated by the adenylation domain. The resulting aminoacyl product can be cyclized by the Diels-Alderase PoxQ and reductively released by the reductive (R) domain of poxE to yield an aldehyde intermediate. The released aldehyde is then substrate for a Knoevenagel condensation by the hydrolyase poxO followed by an oxidation at the 5-position of the pyrrolidone ring. The presence of the olefin from the amino acid building block allows for migration of the substituted allyl group to occur. This allylic transposition reaction takes place in a conjugate addition, semipinacol-like fashion to yield a succinimide intermediate. Iterative two-electron oxidations of the C7 methyl of the succinimide intermediate to the carboxylic acid can be catalyzed by one of two remaining cytochrome P450 monooxygenasess poxC or poxD to yield oxaleimide A. Subsequent oxidation yields the maleimide scaffold oxaleimide I. Both oxaleimide A and oxaleimide I can undergo oxidative modifications in the decalin ring to yield the series of products oxaleimides B to H. In Penicillium oxalicum (strain 114-2 / CGMCC 5302) (Penicillium decumbens), this protein is Thioesterase poxG.